The primary structure comprises 89 residues: Putative defensin-like protein 89 (89 aa).

A signal peptide spans 1–25 (MGFKNNLSLVSVMVFALILLPMISG). 4 cysteine pairs are disulfide-bonded: Cys30/Cys66, Cys36/Cys57, Cys42/Cys64, and Cys46/Cys65.

Belongs to the DEFL family.

It is found in the secreted. The polypeptide is Putative defensin-like protein 89 (Arabidopsis thaliana (Mouse-ear cress)).